Consider the following 172-residue polypeptide: Putative phosphoesterase BCE_1348 (172 aa).

His-34 acts as the Proton donor in catalysis. 2 consecutive short sequence motifs (HXTX) follow at residues 34–37 (HITL) and 115–118 (HLTI). The active-site Proton acceptor is His-115.

It belongs to the 2H phosphoesterase superfamily. YjcG family.

This chain is Putative phosphoesterase BCE_1348, found in Bacillus cereus (strain ATCC 10987 / NRS 248).